We begin with the raw amino-acid sequence, 113 residues long: Large ribosomal subunit protein bL17 (113 aa).

The protein belongs to the bacterial ribosomal protein bL17 family. Part of the 50S ribosomal subunit. Contacts protein L32.

The chain is Large ribosomal subunit protein bL17 from Caldicellulosiruptor bescii (strain ATCC BAA-1888 / DSM 6725 / KCTC 15123 / Z-1320) (Anaerocellum thermophilum).